Consider the following 583-residue polypeptide: Aspartate--tRNA ligase (583 aa).

An L-aspartate-binding site is contributed by glutamate 174. The tract at residues 198–201 (QITK) is aspartate. L-aspartate is bound at residue arginine 220. ATP-binding positions include 220 to 222 (RDE) and glutamine 229. An L-aspartate-binding site is contributed by histidine 443. Glutamate 477 is an ATP binding site. L-aspartate is bound at residue arginine 484. 529–532 (GLDR) provides a ligand contact to ATP.

It belongs to the class-II aminoacyl-tRNA synthetase family. Type 1 subfamily. In terms of assembly, homodimer.

It localises to the cytoplasm. It carries out the reaction tRNA(Asp) + L-aspartate + ATP = L-aspartyl-tRNA(Asp) + AMP + diphosphate. Its function is as follows. Catalyzes the attachment of L-aspartate to tRNA(Asp) in a two-step reaction: L-aspartate is first activated by ATP to form Asp-AMP and then transferred to the acceptor end of tRNA(Asp). In Streptococcus suis (strain 98HAH33), this protein is Aspartate--tRNA ligase.